We begin with the raw amino-acid sequence, 863 residues long: Glycogen phosphorylase (863 aa).

K618 carries the N6-(pyridoxal phosphate)lysine modification.

It belongs to the glycogen phosphorylase family. Requires pyridoxal 5'-phosphate as cofactor.

The catalysed reaction is [(1-&gt;4)-alpha-D-glucosyl](n) + phosphate = [(1-&gt;4)-alpha-D-glucosyl](n-1) + alpha-D-glucose 1-phosphate. Its function is as follows. Phosphorylase is an important allosteric enzyme in carbohydrate metabolism. Enzymes from different sources differ in their regulatory mechanisms and in their natural substrates. However, all known phosphorylases share catalytic and structural properties. This is Glycogen phosphorylase (glgP) from Mycobacterium tuberculosis (strain CDC 1551 / Oshkosh).